Consider the following 214-residue polypeptide: Coiled-coil domain-containing protein 169 (214 aa).

Positions 30–144 form a coiled coil; that stretch reads EMLQMSTFEL…IEQEAKAYYK (115 aa). The tract at residues 161–214 is disordered; the sequence is VTQEAAKKQQSDPAHATREKPAFKAKYNGLAKRRTMTKRRGGMTKGSHPSNMKH. Basic and acidic residues predominate over residues 165 to 182; the sequence is AAKKQQSDPAHATREKPA. The span at 191 to 202 shows a compositional bias: basic residues; it reads AKRRTMTKRRGG.

The protein belongs to the CCDC169 family.

This Xenopus laevis (African clawed frog) protein is Coiled-coil domain-containing protein 169 (ccdc169).